Here is a 560-residue protein sequence, read N- to C-terminus: Kinesin light chain 1 (560 aa).

The stretch at 27-156 (KTKQVIQGLE…HLEFMNQLKK (130 aa)) forms a coiled coil. A compositionally biased stretch (basic and acidic residues) spans 156-176 (KYDDDISPSEDKDSDSSKEPL). The tract at residues 156–203 (KYDDDISPSEDKDSDSSKEPLDDLFPNDEDDPGQGIQQQHSSAAAAAQ) is disordered. S162 carries the post-translational modification Phosphoserine. Over residues 188-203 (GQGIQQQHSSAAAAAQ) the composition is skewed to low complexity. 5 TPR repeats span residues 213 to 246 (LRTL…LEKT), 255 to 288 (ATML…REKT), 297 to 330 (AATL…REKV), 339 to 372 (AKQL…YQTK), and 381 to 414 (AKTK…AHER). A Phosphotyrosine modification is found at Y449. At S460 the chain carries Phosphoserine. A TPR 6 repeat occupies 464-497 (TTTLKNLGALYRRQGKFEAAETLEEAALRSRKQG). Phosphoserine occurs at positions 521 and 524.

Belongs to the kinesin light chain family. In terms of assembly, oligomeric complex composed of two heavy chains and two light chains. Interacts with SPAG9. Interacts with ATCAY; may link mitochondria to KLC1 and regulate mitochondria localization into neuron projections. Interacts (via TPR repeats) with TOR1A; the interaction associates TOR1A with the kinesin oligomeric complex. Interacts with BORCS5. Interacts with MAPK8IP3/JIP3 and NTRK2/TRKB; interaction with NTRK2/TRKB is mediated by MAPK8IP3/JIP3. Interacts with CLSTN1; phosphorylation at Ser-460 inhibits interaction with CLSTN1. Post-translationally, phosphorylation at Ser-460 by ERK inhibits interaction with CLSTN1 and localization to cytoplasmic vesicles. In terms of tissue distribution, expressed in brain (at protein level).

The protein localises to the cell projection. The protein resides in the growth cone. It is found in the cytoplasmic vesicle. It localises to the cytoplasm. Its subcellular location is the cytoskeleton. In terms of biological role, kinesin is a microtubule-associated force-producing protein that may play a role in organelle transport. The light chain may function in coupling of cargo to the heavy chain or in the modulation of its ATPase activity. This Rattus norvegicus (Rat) protein is Kinesin light chain 1 (Klc1).